Here is a 114-residue protein sequence, read N- to C-terminus: C-X-C motif chemokine 5 (114 aa).

Residues 1 to 36 (MSLLSSRAARVPGPSSSLCALLVLLLLLTQPGPIAS) form the signal peptide. Cystine bridges form between C49–C75 and C51–C91.

Belongs to the intercrine alpha (chemokine CxC) family. Monomer. Homodimer. N-terminal processed forms ENA-78(8-78) and ENA-78(9-78) are produced by proteolytic cleavage after secretion from peripheral blood monocytes.

Its subcellular location is the secreted. In terms of biological role, involved in neutrophil activation. In vitro, ENA-78(8-78) and ENA-78(9-78) show a threefold higher chemotactic activity for neutrophil granulocytes. The polypeptide is C-X-C motif chemokine 5 (CXCL5) (Homo sapiens (Human)).